We begin with the raw amino-acid sequence, 229 residues long: Ras-related protein RABA6b (229 aa).

20–27 (GDSAVGKS) is a binding site for GTP. The Effector region signature appears at 42–50 (SKPTIGVDF). GTP contacts are provided by residues 68-72 (DTAGQ), 126-129 (NKSD), and 156-157 (SA). 2 S-geranylgeranyl cysteine lipidation sites follow: C226 and C227.

This sequence belongs to the small GTPase superfamily. Rab family.

The protein localises to the cell membrane. Intracellular vesicle trafficking and protein transport. In Arabidopsis thaliana (Mouse-ear cress), this protein is Ras-related protein RABA6b (RABA6B).